A 572-amino-acid polypeptide reads, in one-letter code: Arginine--tRNA ligase (572 aa).

Positions 127-137 match the 'HIGH' region motif; sequence ANPTGPLHVGH.

The protein belongs to the class-I aminoacyl-tRNA synthetase family. Monomer.

It is found in the cytoplasm. It carries out the reaction tRNA(Arg) + L-arginine + ATP = L-arginyl-tRNA(Arg) + AMP + diphosphate. The sequence is that of Arginine--tRNA ligase from Vesicomyosocius okutanii subsp. Calyptogena okutanii (strain HA).